Here is a 388-residue protein sequence, read N- to C-terminus: Succinate--CoA ligase [ADP-forming] subunit beta (388 aa).

The ATP-grasp domain occupies 9–244 (KEILRKFGVA…PDEEDPKETQ (236 aa)). ATP-binding positions include K46, 53 to 55 (GRG), E99, C102, and E107. N199 and D213 together coordinate Mg(2+). Substrate contacts are provided by residues N264 and 321 to 323 (GIM).

Belongs to the succinate/malate CoA ligase beta subunit family. Heterotetramer of two alpha and two beta subunits. The cofactor is Mg(2+).

It catalyses the reaction succinate + ATP + CoA = succinyl-CoA + ADP + phosphate. The catalysed reaction is GTP + succinate + CoA = succinyl-CoA + GDP + phosphate. Its pathway is carbohydrate metabolism; tricarboxylic acid cycle; succinate from succinyl-CoA (ligase route): step 1/1. Its function is as follows. Succinyl-CoA synthetase functions in the citric acid cycle (TCA), coupling the hydrolysis of succinyl-CoA to the synthesis of either ATP or GTP and thus represents the only step of substrate-level phosphorylation in the TCA. The beta subunit provides nucleotide specificity of the enzyme and binds the substrate succinate, while the binding sites for coenzyme A and phosphate are found in the alpha subunit. The sequence is that of Succinate--CoA ligase [ADP-forming] subunit beta from Anaeromyxobacter dehalogenans (strain 2CP-1 / ATCC BAA-258).